A 536-amino-acid chain; its full sequence is CTP synthase (536 aa).

The tract at residues 1–268 (MSFKSIFLTG…VDFLLSKFGF (268 aa)) is amidoligase domain. Position 14 (Ser14) interacts with CTP. Ser14 lines the UTP pocket. ATP is bound at residue 15–20 (SLGKGL). Tyr55 is an L-glutamine binding site. Asp72 contributes to the ATP binding site. Mg(2+) contacts are provided by Asp72 and Glu142. Residues 149–151 (DIE), 188–193 (KTKPTQ), and Lys224 each bind CTP. UTP contacts are provided by residues 188–193 (KTKPTQ) and Lys224. Positions 294–532 (RIGLVGKYLE…LSAALDYSLE (239 aa)) constitute a Glutamine amidotransferase type-1 domain. An L-glutamine-binding site is contributed by Gly353. Cys380 (nucleophile; for glutamine hydrolysis) is an active-site residue. L-glutamine is bound by residues 381-384 (LGMQ), Glu404, and Arg460. Catalysis depends on residues His505 and Glu507.

Belongs to the CTP synthase family. Homotetramer.

The catalysed reaction is UTP + L-glutamine + ATP + H2O = CTP + L-glutamate + ADP + phosphate + 2 H(+). It catalyses the reaction L-glutamine + H2O = L-glutamate + NH4(+). The enzyme catalyses UTP + NH4(+) + ATP = CTP + ADP + phosphate + 2 H(+). Its pathway is pyrimidine metabolism; CTP biosynthesis via de novo pathway; CTP from UDP: step 2/2. Its activity is regulated as follows. Allosterically activated by GTP, when glutamine is the substrate; GTP has no effect on the reaction when ammonia is the substrate. The allosteric effector GTP functions by stabilizing the protein conformation that binds the tetrahedral intermediate(s) formed during glutamine hydrolysis. Inhibited by the product CTP, via allosteric rather than competitive inhibition. Its function is as follows. Catalyzes the ATP-dependent amination of UTP to CTP with either L-glutamine or ammonia as the source of nitrogen. Regulates intracellular CTP levels through interactions with the four ribonucleotide triphosphates. The chain is CTP synthase from Chlamydia muridarum (strain MoPn / Nigg).